We begin with the raw amino-acid sequence, 434 residues long: D-amino acid dehydrogenase (434 aa).

3–17 serves as a coordination point for FAD; sequence VVILGSGVVGVASAW.

The protein belongs to the DadA oxidoreductase family. FAD is required as a cofactor.

It catalyses the reaction a D-alpha-amino acid + A + H2O = a 2-oxocarboxylate + AH2 + NH4(+). The protein operates within amino-acid degradation; D-alanine degradation; NH(3) and pyruvate from D-alanine: step 1/1. Functionally, oxidative deamination of D-amino acids. This Yersinia enterocolitica serotype O:8 / biotype 1B (strain NCTC 13174 / 8081) protein is D-amino acid dehydrogenase.